Here is a 636-residue protein sequence, read N- to C-terminus: Biosynthetic arginine decarboxylase (636 aa).

Position 101 is an N6-(pyridoxal phosphate)lysine (K101). Substrate is bound at residue 286–296; that stretch reads FDVGGGLAVDY.

This sequence belongs to the Orn/Lys/Arg decarboxylase class-II family. SpeA subfamily. Mg(2+) is required as a cofactor. Requires pyridoxal 5'-phosphate as cofactor.

The catalysed reaction is L-arginine + H(+) = agmatine + CO2. Its pathway is amine and polyamine biosynthesis; agmatine biosynthesis; agmatine from L-arginine: step 1/1. Catalyzes the biosynthesis of agmatine from arginine. This Shewanella frigidimarina (strain NCIMB 400) protein is Biosynthetic arginine decarboxylase.